The sequence spans 104 residues: V-type ATP synthase subunit F (104 aa).

Belongs to the V-ATPase F subunit family.

Produces ATP from ADP in the presence of a proton gradient across the membrane. In Thermus thermophilus (strain ATCC BAA-163 / DSM 7039 / HB27), this protein is V-type ATP synthase subunit F.